A 590-amino-acid chain; its full sequence is Aspartate--tRNA(Asp/Asn) ligase (590 aa).

Glu-175 contacts L-aspartate. The aspartate stretch occupies residues 199–202 (QQYK). Residues Arg-221 and His-450 each coordinate L-aspartate. ATP is bound at residue 221–223 (RDE). ATP is bound at residue Glu-484. Arg-491 contacts L-aspartate. ATP is bound at residue 536–539 (GVDR).

Belongs to the class-II aminoacyl-tRNA synthetase family. Type 1 subfamily. Homodimer.

Its subcellular location is the cytoplasm. The catalysed reaction is tRNA(Asx) + L-aspartate + ATP = L-aspartyl-tRNA(Asx) + AMP + diphosphate. Aspartyl-tRNA synthetase with relaxed tRNA specificity since it is able to aspartylate not only its cognate tRNA(Asp) but also tRNA(Asn). Reaction proceeds in two steps: L-aspartate is first activated by ATP to form Asp-AMP and then transferred to the acceptor end of tRNA(Asp/Asn). The polypeptide is Aspartate--tRNA(Asp/Asn) ligase (Bradyrhizobium sp. (strain ORS 278)).